Consider the following 677-residue polypeptide: UvrABC system protein B (677 aa).

The Helicase ATP-binding domain occupies 27 to 192 (ANLGQGVRDQ…QRNDFDFHRG (166 aa)). 40 to 47 (GVTGSGKT) is a binding site for ATP. Residues 93-116 (YYDYYQPEAYVPASDTYIEKDSSI) carry the Beta-hairpin motif. Positions 432–594 (QVDDLLAECR…IEPRTIRKSL (163 aa)) constitute a Helicase C-terminal domain. A UVR domain is found at 638–673 (AKHIQKLEREMREAAKELEFERAATLRDRIRLLRER).

It belongs to the UvrB family. As to quaternary structure, forms a heterotetramer with UvrA during the search for lesions. Interacts with UvrC in an incision complex.

The protein localises to the cytoplasm. The UvrABC repair system catalyzes the recognition and processing of DNA lesions. A damage recognition complex composed of 2 UvrA and 2 UvrB subunits scans DNA for abnormalities. Upon binding of the UvrA(2)B(2) complex to a putative damaged site, the DNA wraps around one UvrB monomer. DNA wrap is dependent on ATP binding by UvrB and probably causes local melting of the DNA helix, facilitating insertion of UvrB beta-hairpin between the DNA strands. Then UvrB probes one DNA strand for the presence of a lesion. If a lesion is found the UvrA subunits dissociate and the UvrB-DNA preincision complex is formed. This complex is subsequently bound by UvrC and the second UvrB is released. If no lesion is found, the DNA wraps around the other UvrB subunit that will check the other stand for damage. The sequence is that of UvrABC system protein B from Nitratidesulfovibrio vulgaris (strain DP4) (Desulfovibrio vulgaris).